We begin with the raw amino-acid sequence, 211 residues long: ATP phosphoribosyltransferase (211 aa).

The protein belongs to the ATP phosphoribosyltransferase family. Short subfamily. As to quaternary structure, heteromultimer composed of HisG and HisZ subunits.

The protein resides in the cytoplasm. The catalysed reaction is 1-(5-phospho-beta-D-ribosyl)-ATP + diphosphate = 5-phospho-alpha-D-ribose 1-diphosphate + ATP. The protein operates within amino-acid biosynthesis; L-histidine biosynthesis; L-histidine from 5-phospho-alpha-D-ribose 1-diphosphate: step 1/9. Functionally, catalyzes the condensation of ATP and 5-phosphoribose 1-diphosphate to form N'-(5'-phosphoribosyl)-ATP (PR-ATP). Has a crucial role in the pathway because the rate of histidine biosynthesis seems to be controlled primarily by regulation of HisG enzymatic activity. The chain is ATP phosphoribosyltransferase from Pseudomonas putida (strain ATCC 700007 / DSM 6899 / JCM 31910 / BCRC 17059 / LMG 24140 / F1).